The primary structure comprises 744 residues: Zinc finger protein 483 (744 aa).

The region spanning 52 to 134 (RQRFRWFCYS…TLIEDLTQML (83 aa)) is the SCAN box domain. Residues 137–156 (KDPVSQDSTVSQEENSKEDK) form a disordered region. The KRAB domain maps to 170 to 241 (ITLKDVAVNF…EEVSKSSRLD (72 aa)). 2 disordered regions span residues 263 to 308 (ESQQ…SPFG) and 350 to 385 (KEKT…KIHL). The segment covering 277–293 (NQGNSKGRVAQNKTLGS) has biased composition (polar residues). Composition is skewed to basic and acidic residues over residues 298–308 (KKFDPDKSPFG) and 350–363 (KEKT…KSND). 11 consecutive C2H2-type zinc fingers follow at residues 439–461 (HKCS…RRIH), 467–489 (YMCN…HRTH), 495–517 (FKCD…QRIH), 523–545 (YKCK…QRIH), 551–573 (YTCS…QRIH), 579–601 (YKCG…QRIH), 607–629 (YLCN…QRLH), 635–657 (YKCN…QRIH), 663–685 (YKCK…HRIH), 691–713 (YECN…LKIH), and 719–741 (YECN…RGFH).

The protein belongs to the krueppel C2H2-type zinc-finger protein family.

The protein localises to the nucleus. In terms of biological role, may be involved in transcriptional regulation. This Homo sapiens (Human) protein is Zinc finger protein 483 (ZNF483).